A 1947-amino-acid polypeptide reads, in one-letter code: DNA-directed RNA polymerase subunit beta' (1947 aa).

Zn(2+) is bound by residues Cys119, Cys121, Cys141, and Cys144. Asp1778, Asp1780, and Asp1782 together coordinate Mg(2+).

It belongs to the RNA polymerase beta' chain family. RpoC1 subfamily. In plastids the minimal PEP RNA polymerase catalytic core is composed of four subunits: alpha, beta, beta', and beta''. When a (nuclear-encoded) sigma factor is associated with the core the holoenzyme is formed, which can initiate transcription. Mg(2+) serves as cofactor. The cofactor is Zn(2+).

Its subcellular location is the plastid. It is found in the chloroplast. It carries out the reaction RNA(n) + a ribonucleoside 5'-triphosphate = RNA(n+1) + diphosphate. In terms of biological role, DNA-dependent RNA polymerase catalyzes the transcription of DNA into RNA using the four ribonucleoside triphosphates as substrates. This chain is DNA-directed RNA polymerase subunit beta', found in Oedogonium cardiacum (Filamentous green alga).